The sequence spans 860 residues: MQEQYRPDLIEAEVQKYWQENKTFKAIKDTNKEKYYCLSMLPYPSGRLHMGHVRNYTIGDVVSRYQRMIGKNVLQPMGWDAFGLPAEGAAVKNNTAPAKWTYENIEYMKNQLKVLGFSYDWEREVTTCRPEYYKWEQWFFTELYKKGLVYKKTSVVNWCPNDETVLANEQVHEGCCWRCDTPVEQREIPQWFIKITDYAEQLLGGLDTLPEWPEMVKTMQRNWIGRSEGVEITFKIENSDETVAVYTTRPDTFYGVSYMAVAAGHPLAERAAQNNPDLAKFIQECKNTKVAEAELATMEKKGMATGLNAVHPITGKPVPIWVANFVLMHYGTGAVMAVPAHDQRDFEFATKYDLPINQVIAPVNGEDIDLSKAAFTEHGKLVNSAEFDGLDFDAAFNGIADKLERMGAGKRQVNYRLRDWGVSRQRYWGAPIPMLTLENGDVVPAPLQDLPIVLPEDVVMDGVKSPIKADPDWAKTTYNGRPALKETDTFDTFMESSWYYARYTCPQYHEGMLDSEEANYWLPVDQYIGGIEHATMHLLYFRFFHKLLRDAGLVSTDEPTKKLLCQGMVLADAFYYTSPTNERIWVSPTKVTLERDEKGRIVKALDDEGRELVHAGMTKMSKSKNNGIDPQEMVEKYGADTVRLFMMFASPAEMTLEWQESGVEGAKRFLGRLWNLVFEYNKNPAKTALNPTALSGVQKALRRGVHKTIAKVSDDIGRRQTFNTAIAAIMELMNKLTRASLAGEQDRAIMGEALSAVVRMLYPITPHVCFQLWKELGNEDVIDFAPWVQADEAAMVEEEKLVVVQVNGKVRGKITVPADMAEDDIKQAALADENVQKFLSGLNIVKTIYVPGKLFSFVAK.

Residues 42–52 carry the 'HIGH' region motif; sequence PYPSGRLHMGH. The short motif at 619 to 623 is the 'KMSKS' region element; that stretch reads KMSKS. K622 provides a ligand contact to ATP.

This sequence belongs to the class-I aminoacyl-tRNA synthetase family.

It localises to the cytoplasm. It catalyses the reaction tRNA(Leu) + L-leucine + ATP = L-leucyl-tRNA(Leu) + AMP + diphosphate. The protein is Leucine--tRNA ligase of Actinobacillus succinogenes (strain ATCC 55618 / DSM 22257 / CCUG 43843 / 130Z).